Reading from the N-terminus, the 248-residue chain is UPF0736 protein Bcer98_0893 (248 aa).

This sequence belongs to the UPF0736 family.

The sequence is that of UPF0736 protein Bcer98_0893 from Bacillus cytotoxicus (strain DSM 22905 / CIP 110041 / 391-98 / NVH 391-98).